We begin with the raw amino-acid sequence, 156 residues long: Large ribosomal subunit protein uL23 (156 aa).

Positions 1 to 19 are enriched in basic and acidic residues; that stretch reads MAPKAKKEAPAPPKVEAKA. A disordered region spans residues 1–67; sequence MAPKAKKEAP…PKYPRKSAPR (67 aa). The residue at position 2 (A2) is a N,N,N-trimethylalanine. A Glycyl lysine isopeptide (Lys-Gly) (interchain with G-Cter in SUMO2) cross-link involves residue K14. Residues 20 to 67 are compositionally biased toward basic residues; that stretch reads KALKAKKAVLKGVHSHKKKKIRTSPTFRRPKTLRLRRQPKYPRKSAPR. The interval 32–74 is beta-like import receptor binding (BIB) domain; the sequence is VHSHKKKKIRTSPTFRRPKTLRLRRQPKYPRKSAPRRNKLDHY. R41 carries the post-translational modification Citrulline. The residue at position 43 (S43) is a Phosphoserine. A Phosphothreonine modification is found at T45. K70 is subject to N6-acetyllysine.

This sequence belongs to the universal ribosomal protein uL23 family. In terms of assembly, component of the large ribosomal subunit. Interacts with LYAR and GNL2. Interacts with MDM2; this interaction may promote MDM2-mediated p53/TP53 polyubiquitination. Directly interacts (via BIB domain) with IPO5, IPO7, KPNB1 and TNPO1; these interactions are involved in RPL23A nuclear import for the assembly of ribosomal subunits. Interacts with IPO8. In terms of processing, N-terminus is methylated by METTL11A/NTM1. Post-translationally, citrullinated by PADI4.

It localises to the cytoplasm. The protein localises to the nucleus. In terms of biological role, component of the large ribosomal subunit. The ribosome is a large ribonucleoprotein complex responsible for the synthesis of proteins in the cell. Binds a specific region on the 26S rRNA. May promote p53/TP53 degradation possibly through the stimulation of MDM2-mediated TP53 polyubiquitination. The sequence is that of Large ribosomal subunit protein uL23 (RPL23A) from Oryctolagus cuniculus (Rabbit).